The following is a 74-amino-acid chain: uncharacterized protein (74 aa).

The protein to U.parvum UU416.

This is an uncharacterized protein from Mycoplasma pneumoniae (strain ATCC 29342 / M129 / Subtype 1) (Mycoplasmoides pneumoniae).